Here is a 545-residue protein sequence, read N- to C-terminus: CTP synthase (545 aa).

An amidoligase domain region spans residues 1 to 266 (MTTRYIFVTG…DDLVIKRFNL (266 aa)). Residue Ser14 coordinates CTP. Residue Ser14 participates in UTP binding. Residues 15-20 (SLGKGI) and Asp72 contribute to the ATP site. Mg(2+) contacts are provided by Asp72 and Glu140. CTP is bound by residues 147 to 149 (DIE), 187 to 192 (KTKPTQ), and Lys223. UTP-binding positions include 187–192 (KTKPTQ) and Lys223. 239–241 (KDV) serves as a coordination point for ATP. Residues 291-542 (TIGMVGKYIE…IAASYAYQKR (252 aa)) form the Glutamine amidotransferase type-1 domain. Gly352 contributes to the L-glutamine binding site. The active-site Nucleophile; for glutamine hydrolysis is Cys379. L-glutamine-binding positions include 380–383 (LGMQ), Glu403, and Arg470. Active-site residues include His515 and Glu517.

The protein belongs to the CTP synthase family. As to quaternary structure, homotetramer.

The enzyme catalyses UTP + L-glutamine + ATP + H2O = CTP + L-glutamate + ADP + phosphate + 2 H(+). It carries out the reaction L-glutamine + H2O = L-glutamate + NH4(+). The catalysed reaction is UTP + NH4(+) + ATP = CTP + ADP + phosphate + 2 H(+). It participates in pyrimidine metabolism; CTP biosynthesis via de novo pathway; CTP from UDP: step 2/2. Allosterically activated by GTP, when glutamine is the substrate; GTP has no effect on the reaction when ammonia is the substrate. The allosteric effector GTP functions by stabilizing the protein conformation that binds the tetrahedral intermediate(s) formed during glutamine hydrolysis. Inhibited by the product CTP, via allosteric rather than competitive inhibition. Functionally, catalyzes the ATP-dependent amination of UTP to CTP with either L-glutamine or ammonia as the source of nitrogen. Regulates intracellular CTP levels through interactions with the four ribonucleotide triphosphates. The chain is CTP synthase from Shewanella frigidimarina (strain NCIMB 400).